The chain runs to 449 residues: C4-dicarboxylate transport protein (449 aa).

9 helical membrane passes run 5–25, 45–65, 77–97, 149–169, 185–205, 231–251, 298–318, 332–352, and 353–373; these read AVFKSLYFQVLVAIAIGVSLG, LIKMIIAPIIFCTIVVGIAGM, LAVLYFEVVSTIALVIGLIVV, GDMLQVLFFSILFGYAMHSFG, VLFGIVGVIMKVAPIGAFGAM, CVIFILGVLGSIAAFHGFSII, GYSFNLDGTSIYLTMAAVFIA, TLLVILLLTSKGAAGVTGSGF, and IVLAATLSAVGTVPVAGLALI.

It belongs to the dicarboxylate/amino acid:cation symporter (DAACS) (TC 2.A.23) family.

The protein resides in the cell inner membrane. Functionally, responsible for the transport of dicarboxylates such as succinate, fumarate, and malate from the periplasm across the membrane. The chain is C4-dicarboxylate transport protein from Dechloromonas aromatica (strain RCB).